We begin with the raw amino-acid sequence, 66 residues long: Large ribosomal subunit protein bL33c (66 aa).

The protein belongs to the bacterial ribosomal protein bL33 family.

Its subcellular location is the plastid. It localises to the chloroplast. This Fagopyrum esculentum subsp. ancestrale (Wild buckwheat) protein is Large ribosomal subunit protein bL33c.